The following is a 237-amino-acid chain: Pyridoxine 5'-phosphate synthase (237 aa).

3-amino-2-oxopropyl phosphate is bound by residues N7 and R18. H43 serves as the catalytic Proton acceptor. Residues R45 and H50 each contribute to the 1-deoxy-D-xylulose 5-phosphate site. E70 acts as the Proton acceptor in catalysis. Residue T100 participates in 1-deoxy-D-xylulose 5-phosphate binding. Residue H190 is the Proton donor of the active site. 3-amino-2-oxopropyl phosphate is bound by residues D191 and G213–H214.

The protein belongs to the PNP synthase family. As to quaternary structure, homooctamer; tetramer of dimers.

It localises to the cytoplasm. It carries out the reaction 3-amino-2-oxopropyl phosphate + 1-deoxy-D-xylulose 5-phosphate = pyridoxine 5'-phosphate + phosphate + 2 H2O + H(+). It functions in the pathway cofactor biosynthesis; pyridoxine 5'-phosphate biosynthesis; pyridoxine 5'-phosphate from D-erythrose 4-phosphate: step 5/5. In terms of biological role, catalyzes the complicated ring closure reaction between the two acyclic compounds 1-deoxy-D-xylulose-5-phosphate (DXP) and 3-amino-2-oxopropyl phosphate (1-amino-acetone-3-phosphate or AAP) to form pyridoxine 5'-phosphate (PNP) and inorganic phosphate. The sequence is that of Pyridoxine 5'-phosphate synthase from Christiangramia forsetii (strain DSM 17595 / CGMCC 1.15422 / KT0803) (Gramella forsetii).